The primary structure comprises 259 residues: MSSVPDIKTLPKLSNPLEDAKRLAAYRAVDENVDFQNERVIGIGSGSTVVYVAERLGQYLKDPKYTKYVSQFVCIPTGFQSRALILDNGLQLDSIDHHPIIDIAFDGADEVDVNLQLIKGGGACLFQEKLVSTSAKRFIVVADHRKQSPQYLGKNWRQGVPIEVVPSAYVRVQHDLLNKLHAQTAVVRQGGSAKAGPVVTDNNNFIIDADFGEIKDPKSLYVSIEMLIGVVEVGLFIDNAEKVYFGNADGSVNVLDKKN.

Belongs to the ribose 5-phosphate isomerase family.

It is found in the cytoplasm. The enzyme catalyses aldehydo-D-ribose 5-phosphate = D-ribulose 5-phosphate. It participates in carbohydrate degradation; pentose phosphate pathway; D-ribose 5-phosphate from D-ribulose 5-phosphate (non-oxidative stage): step 1/1. The polypeptide is Ribose-5-phosphate isomerase (RKI1) (Vanderwaltozyma polyspora (strain ATCC 22028 / DSM 70294 / BCRC 21397 / CBS 2163 / NBRC 10782 / NRRL Y-8283 / UCD 57-17) (Kluyveromyces polysporus)).